Reading from the N-terminus, the 318-residue chain is MAAQGCAASRLLQLLLQLLLLLLLLAAGGARARWRGEGTSAHLRDIFLGRCAEYRALLSPEQRNKNCTAIWEAFKVALDKDPCSVLPSDYDLFINLSRHSIPRDKSLFWENSHLLVNSFADNTRRFMPLSDVLYGRVADFLSWCRQKNDSGLDYQSCPTSEDCENNPVDSFWKRASIQYSKDSSGVIHVMLNGSEPTGAYPIKGFFADYEIPNLQKEKITRIEIWVMHEIGGPNVESCGEGSMKVLEKRLKDMGFQYSCINDYRPVKLLQCVDHSTHPDCALKSAAAATQRKAPSLYTEQRAGLIIPLFLVLASRTQL.

An N-terminal signal peptide occupies residues 1 to 32 (MAAQGCAASRLLQLLLQLLLLLLLLAAGGARA). 3 disulfides stabilise this stretch: Cys-51–Cys-67, Cys-83–Cys-163, and Cys-144–Cys-157. N-linked (GlcNAc...) asparagine glycans are attached at residues Asn-66 and Asn-95. Trp-109 is a binding site for NAD(+). Trp-109 is a nicotinamide binding site. Asn-148 is a glycosylation site (N-linked (GlcNAc...) asparagine). Trp-172 provides a ligand contact to NAD(+). Asn-192 carries an N-linked (GlcNAc...) asparagine glycan. Glu-210 serves as a coordination point for NAD(+). Intrachain disulfides connect Cys-238–Cys-259 and Cys-271–Cys-280. Residue Ala-293 is the site of GPI-anchor amidated alanine attachment. Positions 294–318 (PSLYTEQRAGLIIPLFLVLASRTQL) are cleaved as a propeptide — removed in mature form.

It belongs to the ADP-ribosyl cyclase family. As to quaternary structure, homodimer. As to expression, expressed in various tissues including placenta, lung, liver and kidney.

It is found in the cell membrane. It carries out the reaction NAD(+) + H2O = ADP-D-ribose + nicotinamide + H(+). The catalysed reaction is NAD(+) = cyclic ADP-beta-D-ribose + nicotinamide + H(+). It catalyses the reaction cyclic ADP-beta-D-ribose + H2O = ADP-D-ribose. With respect to regulation, ADP-ribosyl cyclase and cADPR hydrolase activities are both activated by Zn(2+) or Mn(2+), and inhibited by Cu(2+), while Mg(2+) and Ca(2+) do not have any significant influence. Functionally, catalyzes both the synthesis of cyclic ADP-beta-D-ribose (cADPR) from NAD(+), and its hydrolysis to ADP-D-ribose (ADPR). Cyclic ADPR is known to serve as an endogenous second messenger that elicits calcium release from intracellular stores, and thus regulates the mobilization of intracellular calcium. May be involved in pre-B-cell growth. This is ADP-ribosyl cyclase/cyclic ADP-ribose hydrolase 2 (BST1) from Homo sapiens (Human).